The following is a 559-amino-acid chain: Hepatocyte nuclear factor 1-alpha (559 aa).

Positions 13–44 (GPGRLSALQEQLIWALLGSGLSREVLVHALGE) constitute an HNF-p1 domain. Residues 14–43 (PGRLSALQEQLIWALLGSGLSREVLVHALG) are dimerization. Basic and acidic residues predominate over residues 49–62 (RVTPGAEKGDRGDG). The tract at residues 49 to 73 (RVTPGAEKGDRGDGESSEEGEMDFP) is disordered. The POU-specific atypical domain occupies 78 to 173 (QELEALAPEE…ISQQFTNARH (96 aa)). 6 interaction with DNA regions span residues 121-123 (QRE), 134-140 (HLSQHLN), 146-149 (KNQK), 192-195 (RFKW), 252-254 (RVY), and 259-262 (NRRK). The Nuclear localization signal signature appears at 186-194 (RKGRRNRFK). Residues 188–268 (GRRNRFKWGP…NRRKEEAFRH (81 aa)) constitute a DNA-binding region (homeobox; HNF1-type). The disordered stretch occupies residues 492-559 (TDPEEQTDQP…IPAQMVSTAQ (68 aa)). A compositionally biased stretch (polar residues) spans 499 to 522 (DQPIQEDSLHLQSPSPVPVSSGNL).

This sequence belongs to the HNF1 homeobox family. In terms of assembly, binds DNA as a dimer. As to expression, expressed in liver, intestine, spleen and kidney.

The protein resides in the nucleus. Its function is as follows. Transcriptional activator that regulates the tissue specific expression of multiple genes, especially in pancreas and liver. Binds to the promoter of the albumin gene. This is Hepatocyte nuclear factor 1-alpha (hnf1a) from Salmo salar (Atlantic salmon).